Here is an 87-residue protein sequence, read N- to C-terminus: MRLTALVSGTVQGVGYRRYVQRHARDLGLSGSAENLPDGRVEVVAEGPPEHLERLLHWLRRGPPHARVADVQTQYSEATGLRDFHVY.

The region spanning 2–87 (RLTALVSGTV…ATGLRDFHVY (86 aa)) is the Acylphosphatase-like domain. Catalysis depends on residues Arg-17 and Asn-35.

Belongs to the acylphosphatase family.

It carries out the reaction an acyl phosphate + H2O = a carboxylate + phosphate + H(+). The protein is Acylphosphatase (acyP) of Deinococcus geothermalis (strain DSM 11300 / CIP 105573 / AG-3a).